The following is a 270-amino-acid chain: Replication protein A 32 kDa subunit (270 aa).

N-acetylmethionine is present on Met-1. 2 positions are modified to phosphoserine; by PRKDC: Ser-4 and Ser-8. The segment at 20–41 (YTQSPGGFGSPTPSQAEKKSRV) is disordered. A Phosphothreonine; by PRKDC modification is found at Thr-21. Ser-23 is subject to Phosphoserine; by CDK2. Residue Ser-29 is modified to Phosphoserine; by CDK1. Residue Ser-33 is modified to Phosphoserine; by PRKDC. Residues Lys-37 and Lys-38 each participate in a glycyl lysine isopeptide (Lys-Gly) (interchain with G-Cter in ubiquitin) cross-link. A DNA-binding region (OB) is located at residues 74-148 (VTIVGIIRHA…KSLVAFKIIP (75 aa)). Residues 171 to 192 (KPNSQASAGRPSMSNPGMSEPG) are disordered. The segment at 187-270 (GMSEPGNFSG…DDHFKSTDAE (84 aa)) is interaction with RAD52, TIPIN, UNG and XPA.

Belongs to the replication factor A protein 2 family. Component of the replication protein A complex (RPA/RP-A), a heterotrimeric complex composed of RPA1, RPA2 and RPA3. Interacts with PRPF19; the PRP19-CDC5L complex is recruited to the sites of DNA repair where it ubiquitinates the replication protein A complex (RPA). Interacts with SERTAD3. Interacts with TIPIN. Interacts with TIMELESS. Interacts with PPP4R2; the interaction is direct, DNA damage-dependent and mediates the recruitment of the PP4 catalytic subunit PPP4C. Interacts (hyperphosphorylated) with RAD51. Interacts with SMARCAL1; the interaction is direct and mediates the recruitment to the RPA complex of SMARCAL1. Interacts with RAD52 and XPA; those interactions are direct and associate RAD52 and XPA to the RPA complex. Interacts with FBH1. Interacts with ETAA1; the interaction is direct and promotes ETAA1 recruitment at stalled replication forks. Interacts with DDI2. Interacts (in unphosphorylated form via N-terminus) with EIF4EBP3; the interaction enhances EIF4EBP3-mediated inhibition of EIF4E-mediated mRNA nuclear export. Interacts with nuclear UNG (isoform 2); this interaction mediates UNG recruitment to RPA-coated single-stranded DNA at stalled replication forks. Differentially phosphorylated throughout the cell cycle, becoming phosphorylated at the G1-S transition and dephosphorylated in late mitosis. Mainly phosphorylated at Ser-23 and Ser-29, by cyclin A-CDK2 and cyclin B-CDK1, respectively during DNA replication and mitosis. Dephosphorylation may require the serine/threonine-protein phosphatase 4. Phosphorylation at Ser-23 and Ser-29 is a prerequisite for further phosphorylation. Becomes hyperphosphorylated on additional residues including Ser-4, Ser-8, Thr-21 and Ser-33 in response to DNA damage. Hyperphosphorylation is mediated by ATM, ATR and PRKDC. Primarily recruited to DNA repair nuclear foci as a hypophosphorylated form it undergoes subsequent hyperphosphorylation, catalyzed by ATR. Hyperphosphorylation is required for RAD51 recruitment to chromatin and efficient DNA repair. Phosphorylation at Thr-21 depends upon RFWD3 presence. Post-translationally, DNA damage-induced 'Lys-63'-linked polyubiquitination by PRPF19 mediates ATRIP recruitment to the RPA complex at sites of DNA damage and activation of ATR. Ubiquitinated by RFWD3 at stalled replication forks in response to DNA damage: ubiquitination by RFWD3 does not lead to degradation by the proteasome and promotes removal of the RPA complex from stalled replication forks, promoting homologous recombination.

It localises to the nucleus. The protein resides in the PML body. In terms of biological role, as part of the heterotrimeric replication protein A complex (RPA/RP-A), binds and stabilizes single-stranded DNA intermediates, that form during DNA replication or upon DNA stress. It prevents their reannealing and in parallel, recruits and activates different proteins and complexes involved in DNA metabolism. Thereby, it plays an essential role both in DNA replication and the cellular response to DNA damage. In the cellular response to DNA damage, the RPA complex controls DNA repair and DNA damage checkpoint activation. Through recruitment of ATRIP activates the ATR kinase a master regulator of the DNA damage response. It is required for the recruitment of the DNA double-strand break repair factors RAD51 and RAD52 to chromatin in response to DNA damage. Also recruits to sites of DNA damage proteins like XPA and XPG that are involved in nucleotide excision repair and is required for this mechanism of DNA repair. Also plays a role in base excision repair (BER) probably through interaction with UNG. Also recruits SMARCAL1/HARP, which is involved in replication fork restart, to sites of DNA damage. May also play a role in telomere maintenance. This is Replication protein A 32 kDa subunit from Mus musculus (Mouse).